A 387-amino-acid polypeptide reads, in one-letter code: Exodeoxyribonuclease 7 large subunit (387 aa).

It belongs to the XseA family. In terms of assembly, heterooligomer composed of large and small subunits.

It localises to the cytoplasm. The enzyme catalyses Exonucleolytic cleavage in either 5'- to 3'- or 3'- to 5'-direction to yield nucleoside 5'-phosphates.. Its function is as follows. Bidirectionally degrades single-stranded DNA into large acid-insoluble oligonucleotides, which are then degraded further into small acid-soluble oligonucleotides. This Campylobacter fetus subsp. fetus (strain 82-40) protein is Exodeoxyribonuclease 7 large subunit.